The following is a 475-amino-acid chain: NADP-dependent glyceraldehyde-3-phosphate dehydrogenase (475 aa).

A substrate-binding site is contributed by R103. Residue S151 participates in NADP(+) binding. A substrate-binding site is contributed by 154-155; it reads NY. NADP(+)-binding positions include K177, T180, D215, and 230-251; that span reads GSTG…MLEL. Catalysis depends on residues E250 and C284. Substrate is bound at residue 283 to 285; that stretch reads RCT. E377 lines the NADP(+) pocket. R437 is a substrate binding site.

This sequence belongs to the aldehyde dehydrogenase family. In terms of assembly, homotetramer.

It catalyses the reaction D-glyceraldehyde 3-phosphate + NADP(+) + H2O = (2R)-3-phosphoglycerate + NADPH + 2 H(+). In Streptococcus mutans serotype c (strain ATCC 700610 / UA159), this protein is NADP-dependent glyceraldehyde-3-phosphate dehydrogenase (gapN).